Here is a 139-residue protein sequence, read N- to C-terminus: Small ribosomal subunit protein bS6 (139 aa).

Residues lysine 114–glutamate 133 are compositionally biased toward basic and acidic residues. The interval lysine 114–glutamate 139 is disordered.

This sequence belongs to the bacterial ribosomal protein bS6 family.

Functionally, binds together with bS18 to 16S ribosomal RNA. This is Small ribosomal subunit protein bS6 from Campylobacter concisus (strain 13826).